The following is a 515-amino-acid chain: MTEQPTTTPSALKRAAREFGELTAVADGDVRLTFTQLHDRVRDFAAALSSQDVRPGDHVAVWSPNTYHWVVAALGIHYAGATLVPINTRYTATEALDILERTKTTALVVAGNFLGTDRYASLRDESSTFDLPTVVRVPVDGGDAELPGVFDFDDFLALADEDTRAEADARAAAVSPDDVSDVMFTSGTTGRSKGVMSAHRQSVGIAQAWGECAEVTSDDNYLIINPFFHTFGYKAGFLVCLLNGATVVPMAVFDVPKVMATVHDEQITVLPGAPTIFQSILDHPDRPKYDLSSLRVAITGAAAVPVALVERMQSELSFDAVLTAYGQTEAVVVTMCRTDDDPVTVSTTSGRAIPGMEVRIGDQGEILVRGENVMLGYLDDPESTAKTIDADGWLHTGDVGTLDDRGYVDITDRLKDMYISGGFNVYPAEVENALARLDGVAESAVIGVPDERMGEVGRAYVVAKPGVTLAEDDVVAFCKERLANFKVPRSVRFVDSLPRNPSGKVMKNVLREEKK.

ATP contacts are provided by residues 185–193, Asp-398, Arg-413, and Lys-504; that span reads TSGTTGRSK.

The protein belongs to the ATP-dependent AMP-binding enzyme family.

It catalyses the reaction 3-[(3aS,4S,7aS)-7a-methyl-1,5-dioxo-octahydro-1H-inden-4-yl]propanoate + ATP + CoA = 3-[(3aS,4S,7aS)-7a-methyl-1,5-dioxo-octahydro-1H-inden-4-yl]propanoyl-CoA + AMP + diphosphate. Functionally, involved in the catabolism of the rings C and D of cholesterol. Catalyzes the ATP-dependent CoA thioesterification of 3aalpha-H-4alpha(3'-propanoate)-7abeta-methylhexahydro-1,5-indanedione (HIP). The chain is 3-[(3aS,4S,7aS)-7a-methyl-1,5-dioxo-octahydro-1H-inden-4-yl]propanoyl:CoA ligase from Rhodococcus jostii (strain RHA1).